Here is a 510-residue protein sequence, read N- to C-terminus: Pentatricopeptide repeat-containing protein At1g71060, mitochondrial (510 aa).

The N-terminal 14 residues, 1-14, are a transit peptide targeting the mitochondrion; sequence MVFSRFFRVTGVNL. PPR repeat units lie at residues 127–157, 161–195, 196–230, 231–265, 266–300, 301–335, 336–370, 371–401, 403–437, and 438–472; these read TTSN…MKAK, SKET…GFKM, ESSD…RFEP, DIKS…GFEP, DVVA…NCKP, SPHI…GFPL, EAPT…GVGP, NART…MSCE, TVST…GVLP, and GMHM…GIRP.

It belongs to the PPR family. P subfamily.

The protein localises to the mitochondrion. The chain is Pentatricopeptide repeat-containing protein At1g71060, mitochondrial from Arabidopsis thaliana (Mouse-ear cress).